Consider the following 171-residue polypeptide: Shikimate kinase (171 aa).

14–19 (GAGKST) serves as a coordination point for ATP. S18 lines the Mg(2+) pocket. Substrate contacts are provided by D36, R60, and G82. R120 contacts ATP. Position 139 (R139) interacts with substrate. Q156 is a binding site for ATP.

Belongs to the shikimate kinase family. In terms of assembly, monomer. Mg(2+) is required as a cofactor.

Its subcellular location is the cytoplasm. It carries out the reaction shikimate + ATP = 3-phosphoshikimate + ADP + H(+). The protein operates within metabolic intermediate biosynthesis; chorismate biosynthesis; chorismate from D-erythrose 4-phosphate and phosphoenolpyruvate: step 5/7. Its function is as follows. Catalyzes the specific phosphorylation of the 3-hydroxyl group of shikimic acid using ATP as a cosubstrate. The chain is Shikimate kinase from Shewanella woodyi (strain ATCC 51908 / MS32).